The following is a 129-amino-acid chain: Small ribosomal subunit protein uS11 (129 aa).

It belongs to the universal ribosomal protein uS11 family. Part of the 30S ribosomal subunit. Interacts with proteins S7 and S18. Binds to IF-3.

In terms of biological role, located on the platform of the 30S subunit, it bridges several disparate RNA helices of the 16S rRNA. Forms part of the Shine-Dalgarno cleft in the 70S ribosome. The polypeptide is Small ribosomal subunit protein uS11 (Novosphingobium aromaticivorans (strain ATCC 700278 / DSM 12444 / CCUG 56034 / CIP 105152 / NBRC 16084 / F199)).